The sequence spans 365 residues: Probable dual-specificity RNA methyltransferase RlmN (365 aa).

The active-site Proton acceptor is Glu108. A Radical SAM core domain is found at 114–352 (YPDRNTVCIS…SCTVRDTRGR (239 aa)). A disulfide bond links Cys121 and Cys358. [4Fe-4S] cluster is bound by residues Cys128, Cys132, and Cys135. Residues 179–180 (GE), Ser213, 236–238 (SLH), and Asn315 contribute to the S-adenosyl-L-methionine site. Catalysis depends on Cys358, which acts as the S-methylcysteine intermediate.

The protein belongs to the radical SAM superfamily. RlmN family. [4Fe-4S] cluster serves as cofactor.

The protein resides in the cytoplasm. The catalysed reaction is adenosine(2503) in 23S rRNA + 2 reduced [2Fe-2S]-[ferredoxin] + 2 S-adenosyl-L-methionine = 2-methyladenosine(2503) in 23S rRNA + 5'-deoxyadenosine + L-methionine + 2 oxidized [2Fe-2S]-[ferredoxin] + S-adenosyl-L-homocysteine. It carries out the reaction adenosine(37) in tRNA + 2 reduced [2Fe-2S]-[ferredoxin] + 2 S-adenosyl-L-methionine = 2-methyladenosine(37) in tRNA + 5'-deoxyadenosine + L-methionine + 2 oxidized [2Fe-2S]-[ferredoxin] + S-adenosyl-L-homocysteine. Functionally, specifically methylates position 2 of adenine 2503 in 23S rRNA and position 2 of adenine 37 in tRNAs. The polypeptide is Probable dual-specificity RNA methyltransferase RlmN (Mycolicibacterium gilvum (strain PYR-GCK) (Mycobacterium gilvum (strain PYR-GCK))).